Here is a 181-residue protein sequence, read N- to C-terminus: dCTP deaminase (181 aa).

Residues 100-105 (RSTFAR) and Asp116 contribute to the dCTP site. Glu126 acts as the Proton donor/acceptor in catalysis. Residues Tyr158 and Gln165 each coordinate dCTP. The tract at residues 160–181 (GKYQGQRGVTPPKLDNSSSKNF) is disordered.

The protein belongs to the dCTP deaminase family. As to quaternary structure, homotrimer.

The catalysed reaction is dCTP + H2O + H(+) = dUTP + NH4(+). It participates in pyrimidine metabolism; dUMP biosynthesis; dUMP from dCTP (dUTP route): step 1/2. Its function is as follows. Catalyzes the deamination of dCTP to dUTP. This is dCTP deaminase from Desulfurococcus amylolyticus (strain DSM 18924 / JCM 16383 / VKM B-2413 / 1221n) (Desulfurococcus kamchatkensis).